A 317-amino-acid polypeptide reads, in one-letter code: 4-hydroxy-3-methylbut-2-enyl diphosphate reductase (317 aa).

A [4Fe-4S] cluster-binding site is contributed by cysteine 12. The (2E)-4-hydroxy-3-methylbut-2-enyl diphosphate site is built by histidine 41 and histidine 74. Dimethylallyl diphosphate-binding residues include histidine 41 and histidine 74. Isopentenyl diphosphate is bound by residues histidine 41 and histidine 74. Cysteine 97 serves as a coordination point for [4Fe-4S] cluster. Histidine 125 serves as a coordination point for (2E)-4-hydroxy-3-methylbut-2-enyl diphosphate. Histidine 125 contacts dimethylallyl diphosphate. Histidine 125 serves as a coordination point for isopentenyl diphosphate. Glutamate 127 functions as the Proton donor in the catalytic mechanism. Residue threonine 168 participates in (2E)-4-hydroxy-3-methylbut-2-enyl diphosphate binding. [4Fe-4S] cluster is bound at residue cysteine 198. Serine 226, serine 227, asparagine 228, and serine 270 together coordinate (2E)-4-hydroxy-3-methylbut-2-enyl diphosphate. The dimethylallyl diphosphate site is built by serine 226, serine 227, asparagine 228, and serine 270. Isopentenyl diphosphate is bound by residues serine 226, serine 227, asparagine 228, and serine 270.

This sequence belongs to the IspH family. As to quaternary structure, homodimer. Requires [4Fe-4S] cluster as cofactor.

The enzyme catalyses isopentenyl diphosphate + 2 oxidized [2Fe-2S]-[ferredoxin] + H2O = (2E)-4-hydroxy-3-methylbut-2-enyl diphosphate + 2 reduced [2Fe-2S]-[ferredoxin] + 2 H(+). It carries out the reaction dimethylallyl diphosphate + 2 oxidized [2Fe-2S]-[ferredoxin] + H2O = (2E)-4-hydroxy-3-methylbut-2-enyl diphosphate + 2 reduced [2Fe-2S]-[ferredoxin] + 2 H(+). It participates in isoprenoid biosynthesis; dimethylallyl diphosphate biosynthesis; dimethylallyl diphosphate from (2E)-4-hydroxy-3-methylbutenyl diphosphate: step 1/1. The protein operates within isoprenoid biosynthesis; isopentenyl diphosphate biosynthesis via DXP pathway; isopentenyl diphosphate from 1-deoxy-D-xylulose 5-phosphate: step 6/6. Its function is as follows. Catalyzes the conversion of 1-hydroxy-2-methyl-2-(E)-butenyl 4-diphosphate (HMBPP) into a mixture of isopentenyl diphosphate (IPP) and dimethylallyl diphosphate (DMAPP). Acts in the terminal step of the DOXP/MEP pathway for isoprenoid precursor biosynthesis. This Proteus mirabilis (strain HI4320) protein is 4-hydroxy-3-methylbut-2-enyl diphosphate reductase.